A 333-amino-acid chain; its full sequence is Beta-ketoacyl-[acyl-carrier-protein] synthase III (333 aa).

Residues C116 and H258 contribute to the active site. Residues 259-263 are ACP-binding; the sequence is QANKR. Residue N288 is part of the active site.

This sequence belongs to the thiolase-like superfamily. FabH family. Homodimer.

Its subcellular location is the cytoplasm. The enzyme catalyses malonyl-[ACP] + acetyl-CoA + H(+) = 3-oxobutanoyl-[ACP] + CO2 + CoA. It functions in the pathway lipid metabolism; fatty acid biosynthesis. Functionally, catalyzes the condensation reaction of fatty acid synthesis by the addition to an acyl acceptor of two carbons from malonyl-ACP. Catalyzes the first condensation reaction which initiates fatty acid synthesis and may therefore play a role in governing the total rate of fatty acid production. Possesses both acetoacetyl-ACP synthase and acetyl transacylase activities. Its substrate specificity determines the biosynthesis of branched-chain and/or straight-chain of fatty acids. This is Beta-ketoacyl-[acyl-carrier-protein] synthase III from Koribacter versatilis (strain Ellin345).